The primary structure comprises 136 residues: Translation initiation factor 5A (136 aa).

Residue Lys-37 is modified to Hypusine.

This sequence belongs to the eIF-5A family.

Its subcellular location is the cytoplasm. Functions by promoting the formation of the first peptide bond. This Thermococcus gammatolerans (strain DSM 15229 / JCM 11827 / EJ3) protein is Translation initiation factor 5A (eIF5A).